A 351-amino-acid polypeptide reads, in one-letter code: Photosystem II D2 protein (351 aa).

A helical membrane pass occupies residues 39–59; that stretch reads CAFLALGGWLTGTTFVTSWYT. His116 contacts chlorophyll a. Residues 123–139 traverse the membrane as a helical segment; that stretch reads GFMLRQFEIARLVGIRP. Gln128 and Asn141 together coordinate pheophytin a. A helical membrane pass occupies residues 151 to 164; sequence VFVSVFLMYPLGQS. His196 contacts chlorophyll a. The helical transmembrane segment at 206–226 threads the bilayer; that stretch reads GALLCAIHGATVENTLFEDGE. The a plastoquinone site is built by His213 and Phe260. His213 contacts Fe cation. His267 contributes to the Fe cation binding site. Residues 277 to 293 traverse the membrane as a helical segment; it reads GLWMSAVGIVGLALNLR.

The protein belongs to the reaction center PufL/M/PsbA/D family. In terms of assembly, PSII is composed of 1 copy each of membrane proteins PsbA, PsbB, PsbC, PsbD, PsbE, PsbF, PsbH, PsbI, PsbJ, PsbK, PsbL, PsbM, PsbT, PsbX, PsbY, PsbZ, Psb30/Ycf12, peripheral proteins PsbO, CyanoQ (PsbQ), PsbU, PsbV and a large number of cofactors. It forms dimeric complexes. The D1/D2 heterodimer binds P680, chlorophylls that are the primary electron donor of PSII, and subsequent electron acceptors. It shares a non-heme iron and each subunit binds pheophytin, quinone, additional chlorophylls, carotenoids and lipids. There is also a Cl(-1) ion associated with D1 and D2, which is required for oxygen evolution. The PSII complex binds additional chlorophylls, carotenoids and specific lipids. serves as cofactor.

The protein localises to the cellular thylakoid membrane. It catalyses the reaction 2 a plastoquinone + 4 hnu + 2 H2O = 2 a plastoquinol + O2. Functionally, photosystem II (PSII) is a light-driven water:plastoquinone oxidoreductase that uses light energy to abstract electrons from H(2)O, generating O(2) and a proton gradient subsequently used for ATP formation. It consists of a core antenna complex that captures photons, and an electron transfer chain that converts photonic excitation into a charge separation. The D1/D2 (PsbA/PsbD) reaction center heterodimer binds P680, the primary electron donor of PSII as well as several subsequent electron acceptors. D2 is needed for assembly of a stable PSII complex. This is Photosystem II D2 protein from Trichormus variabilis (strain ATCC 29413 / PCC 7937) (Anabaena variabilis).